A 25-amino-acid polypeptide reads, in one-letter code: Dermaseptin-DI5 (25 aa).

It belongs to the frog skin active peptide (FSAP) family. Dermaseptin subfamily. As to expression, expressed by the skin glands.

The protein resides in the secreted. Its function is as follows. Antibacterial peptide with activity against Gram-positive bacteria S.aureus and E.faecalis, and Gram-negative bacteria P.aeruginosa and E.coli. In Phyllomedusa distincta (Monkey frog), this protein is Dermaseptin-DI5.